The primary structure comprises 108 residues: Large ribosomal subunit protein uL23 (108 aa).

The protein belongs to the universal ribosomal protein uL23 family. In terms of assembly, part of the 50S ribosomal subunit. Contacts protein L29, and trigger factor when it is bound to the ribosome.

In terms of biological role, one of the early assembly proteins it binds 23S rRNA. One of the proteins that surrounds the polypeptide exit tunnel on the outside of the ribosome. Forms the main docking site for trigger factor binding to the ribosome. This chain is Large ribosomal subunit protein uL23, found in Albidiferax ferrireducens (strain ATCC BAA-621 / DSM 15236 / T118) (Rhodoferax ferrireducens).